The following is an 86-amino-acid chain: Large ribosomal subunit protein eL30 (86 aa).

The protein belongs to the eukaryotic ribosomal protein eL30 family.

The polypeptide is Large ribosomal subunit protein eL30 (rpl30e) (Archaeoglobus fulgidus (strain ATCC 49558 / DSM 4304 / JCM 9628 / NBRC 100126 / VC-16)).